The following is a 473-amino-acid chain: Ribulose bisphosphate carboxylase large chain 2 (473 aa).

2 residues coordinate substrate: asparagine 116 and threonine 166. Catalysis depends on lysine 168, which acts as the Proton acceptor. Lysine 170 is a binding site for substrate. Positions 194, 196, and 197 each coordinate Mg(2+). Lysine 194 is modified (N6-carboxylysine). Histidine 287 functions as the Proton acceptor in the catalytic mechanism. Residues arginine 288, histidine 320, and serine 372 each coordinate substrate.

This sequence belongs to the RuBisCO large chain family. Type I subfamily. As to quaternary structure, heterohexadecamer of 8 large chains and 8 small chains. Mg(2+) is required as a cofactor.

It catalyses the reaction 2 (2R)-3-phosphoglycerate + 2 H(+) = D-ribulose 1,5-bisphosphate + CO2 + H2O. It carries out the reaction D-ribulose 1,5-bisphosphate + O2 = 2-phosphoglycolate + (2R)-3-phosphoglycerate + 2 H(+). Its function is as follows. RuBisCO catalyzes two reactions: the carboxylation of D-ribulose 1,5-bisphosphate, the primary event in carbon dioxide fixation, as well as the oxidative fragmentation of the pentose substrate. Both reactions occur simultaneously and in competition at the same active site. This Acidithiobacillus ferrooxidans (Thiobacillus ferrooxidans) protein is Ribulose bisphosphate carboxylase large chain 2.